The sequence spans 561 residues: 2-succinyl-5-enolpyruvyl-6-hydroxy-3-cyclohexene-1-carboxylate synthase (561 aa).

This sequence belongs to the TPP enzyme family. MenD subfamily. In terms of assembly, homodimer. The cofactor is Mg(2+). Mn(2+) serves as cofactor. It depends on thiamine diphosphate as a cofactor.

The enzyme catalyses isochorismate + 2-oxoglutarate + H(+) = 5-enolpyruvoyl-6-hydroxy-2-succinyl-cyclohex-3-ene-1-carboxylate + CO2. It participates in quinol/quinone metabolism; 1,4-dihydroxy-2-naphthoate biosynthesis; 1,4-dihydroxy-2-naphthoate from chorismate: step 2/7. It functions in the pathway quinol/quinone metabolism; menaquinone biosynthesis. In terms of biological role, catalyzes the thiamine diphosphate-dependent decarboxylation of 2-oxoglutarate and the subsequent addition of the resulting succinic semialdehyde-thiamine pyrophosphate anion to isochorismate to yield 2-succinyl-5-enolpyruvyl-6-hydroxy-3-cyclohexene-1-carboxylate (SEPHCHC). This Proteus mirabilis (strain HI4320) protein is 2-succinyl-5-enolpyruvyl-6-hydroxy-3-cyclohexene-1-carboxylate synthase.